Consider the following 383-residue polypeptide: NAD(P) transhydrogenase subunit alpha part 1 (383 aa).

NAD(+) is bound by residues 131–134 (QNMD), Val181, 201–203 (DVR), and Gly231.

It belongs to the AlaDH/PNT family. Heterotrimer of two alpha chains and a beta (PntB) chain; in Rickettsia, the alpha chain is made of two subunits (PntAA and PntAB) and forms a dimer.

It carries out the reaction NAD(+) + NADPH + H(+)(in) = NADH + NADP(+) + H(+)(out). In terms of biological role, the transhydrogenation between NADH and NADP is coupled to respiration and ATP hydrolysis and functions as a proton pump across the membrane. In Rickettsia prowazekii (strain Madrid E), this protein is NAD(P) transhydrogenase subunit alpha part 1 (pntAA).